We begin with the raw amino-acid sequence, 319 residues long: Cytochrome c biogenesis protein CcsA (319 aa).

7 helical membrane-spanning segments follow: residues 17–37 (TISIVITIHLITLLVHELGGL), 44–64 (GMIVTFFSITGFLVSRWASSG), 68–88 (LSNLYESLIFLSWALYILHTI), 143–163 (MLLSYATLLCGSLLSAAILII), 223–243 (VISLGFTLLTIGILCGAVWAN), 257–271 (TWAFITWTIFAIYLH), and 286–306 (VASIGFLIIWICYFGINLLGI).

Belongs to the CcmF/CycK/Ccl1/NrfE/CcsA family. As to quaternary structure, may interact with Ccs1.

The protein localises to the plastid. The protein resides in the chloroplast thylakoid membrane. In terms of biological role, required during biogenesis of c-type cytochromes (cytochrome c6 and cytochrome f) at the step of heme attachment. This chain is Cytochrome c biogenesis protein CcsA, found in Lolium perenne (Perennial ryegrass).